The primary structure comprises 821 residues: MTRNAPPGQESTDLAWLVTPAKDLVENFSIDVLKALAGYLEVIRQESEDTDNQVDAATTYRLFDFQRACRIIQGSCAVYGRKVDHVYELTISVVDLVENKGQDDGNTGSRRGAGRRKNFNLGSTNYDLADIDSLKQEALANFEKTVKEEKKSIDAVRMVENAEVIESQYERKSCLVAKPTQFMFKLNYGQLNRTDEQILNAKSRPDVIGKVKDFEIKKSKVKHDQQILYSHDCYRGNLDQFTLPGARWMPDNKELAANFGVADLEVELDLEQEHEKISAYGPFKDPLSGREVVPPPRWFIEQEAVRQNQEIQSRATSRAITIAAKTLRDSQGFGSQPTRLSQPFVERHRQSNHLNDFLSFVEGRVNKNRPSTHLTTGLVDMFVDNFGSVMQNDEPNTSRRPDENYAPMDFDDDFGGGGDDDDDDYIRNLSRRDEKRAPAPWDELDKNHIIWYTGDENLPVVSKPVKKITKFQPKPAEMLARKQRREEKINKSRRDEFMETHDYLQDYYYWRSAARINPIKDWKIESLRTAILAEKKRRIKEKTAKIREARIQNMQRKRTARVIPVEQFEPVTEDIPTSNRRTLGAEYDDVVDEDLAAEVELSMFGGGFDDDEEDVRPRGERPPMAPNNLEFDALQTDFDIPPAEYVPLRFEDIDDAELNSVINLPGNLLIDKALPLLKKFAENRTDREQMAYEMAKAYEDVDVAVSTLQEHVDKWHSRMEPILEEGETRKEYDVHAVGRAVIGQYDIEGGTKRLLDLVMDRPWYEISRYFLSCLFMCNVGNVMVSEDMELPLEERINSMKITLLKRDMHCEMFKEAGALDA.

The disordered stretch occupies residues 389-426 (VMQNDEPNTSRRPDENYAPMDFDDDFGGGGDDDDDDYI). A compositionally biased stretch (acidic residues) spans 409–424 (DFDDDFGGGGDDDDDD). A coiled-coil region spans residues 529–561 (TAILAEKKRRIKEKTAKIREARIQNMQRKRTAR).

The protein belongs to the CND2 H2 (condensin-2 subunit 2) family. As to quaternary structure, component of the condensin II complex, which contains the mix-1/SMC2 and smc-4/SMC4 heterodimer, and three non SMC subunits, capg-2, kle-2 and hcp-6 that probably regulate the complex. Within the complex, interacts with mix-1, smc-4, capg-2 and hcp-6.

The protein localises to the nucleus. It is found in the chromosome. The protein resides in the centromere. Functionally, regulatory subunit of the condensin II complex, a complex that seems to play a role in prophase chromosome condensation and in chromosome segregation in mitosis and in meiosis. This chain is Condensin-2 complex subunit kle-2 (kle-2), found in Caenorhabditis elegans.